Here is a 565-residue protein sequence, read N- to C-terminus: Dihydroxy-acid dehydratase (565 aa).

D80 is a binding site for Mg(2+). C121 is a [2Fe-2S] cluster binding site. Residues D122 and K123 each coordinate Mg(2+). Position 123 is an N6-carboxylysine (K123). [2Fe-2S] cluster is bound at residue C194. E447 lines the Mg(2+) pocket. The active-site Proton acceptor is the S473.

The protein belongs to the IlvD/Edd family. In terms of assembly, homodimer. [2Fe-2S] cluster is required as a cofactor. It depends on Mg(2+) as a cofactor.

The catalysed reaction is (2R)-2,3-dihydroxy-3-methylbutanoate = 3-methyl-2-oxobutanoate + H2O. It carries out the reaction (2R,3R)-2,3-dihydroxy-3-methylpentanoate = (S)-3-methyl-2-oxopentanoate + H2O. It functions in the pathway amino-acid biosynthesis; L-isoleucine biosynthesis; L-isoleucine from 2-oxobutanoate: step 3/4. The protein operates within amino-acid biosynthesis; L-valine biosynthesis; L-valine from pyruvate: step 3/4. In terms of biological role, functions in the biosynthesis of branched-chain amino acids. Catalyzes the dehydration of (2R,3R)-2,3-dihydroxy-3-methylpentanoate (2,3-dihydroxy-3-methylvalerate) into 2-oxo-3-methylpentanoate (2-oxo-3-methylvalerate) and of (2R)-2,3-dihydroxy-3-methylbutanoate (2,3-dihydroxyisovalerate) into 2-oxo-3-methylbutanoate (2-oxoisovalerate), the penultimate precursor to L-isoleucine and L-valine, respectively. The chain is Dihydroxy-acid dehydratase from Pelodictyon phaeoclathratiforme (strain DSM 5477 / BU-1).